Here is a 284-residue protein sequence, read N- to C-terminus: Phosphatidylglycerol--prolipoprotein diacylglyceryl transferase (284 aa).

The next 7 membrane-spanning stretches (helical) occupy residues 21-41 (IEVHWYGLAYACAIVVAFYMA), 62-82 (YFLWAELGIVLGARVGYILIY), 106-126 (FVGIRGMSYHGGLVGFLIASY), 136-156 (LLIYLDLIAISLPLGYVFGRI), 190-210 (PSQLIEAFLEGVIVFLMVMWA), 218-238 (GLLIVVYGLGYSLMRFIAEFY), and 252-272 (LSMGQILSLFMVIVSLGILLY). Arg-155 provides a ligand contact to a 1,2-diacyl-sn-glycero-3-phospho-(1'-sn-glycerol).

It belongs to the Lgt family.

It localises to the cell inner membrane. The enzyme catalyses L-cysteinyl-[prolipoprotein] + a 1,2-diacyl-sn-glycero-3-phospho-(1'-sn-glycerol) = an S-1,2-diacyl-sn-glyceryl-L-cysteinyl-[prolipoprotein] + sn-glycerol 1-phosphate + H(+). Its pathway is protein modification; lipoprotein biosynthesis (diacylglyceryl transfer). Functionally, catalyzes the transfer of the diacylglyceryl group from phosphatidylglycerol to the sulfhydryl group of the N-terminal cysteine of a prolipoprotein, the first step in the formation of mature lipoproteins. This Helicobacter pylori (strain P12) protein is Phosphatidylglycerol--prolipoprotein diacylglyceryl transferase.